A 695-amino-acid polypeptide reads, in one-letter code: Hypersensitivity response secretion protein HrpI (695 aa).

7 helical membrane-spanning segments follow: residues 21 to 38, 45 to 61, 68 to 92, 111 to 135, 203 to 223, 244 to 262, and 311 to 327; these read LVGA…ITPL, VLIA…IMLA, LAFS…VSTT, FVVG…FLVI, AIAS…IGVL, GLIA…GMII, and VFIT…LLQL.

The protein belongs to the FHIPEP (flagella/HR/invasion proteins export pore) family.

Its subcellular location is the cell inner membrane. Its function is as follows. Involved in the secretion of harpin-pss; a proteinaceous elicitor of the hypersensitivity response in plants. This is Hypersensitivity response secretion protein HrpI (hrpI) from Pseudomonas syringae pv. syringae.